Reading from the N-terminus, the 218-residue chain is Small ribosomal subunit protein uS3 (218 aa).

Positions 38-106 (LRSDLKKKLM…PVHLNIEEVK (69 aa)) constitute a KH type-2 domain.

This sequence belongs to the universal ribosomal protein uS3 family. In terms of assembly, part of the 30S ribosomal subunit. Forms a tight complex with proteins S10 and S14.

Binds the lower part of the 30S subunit head. Binds mRNA in the 70S ribosome, positioning it for translation. The polypeptide is Small ribosomal subunit protein uS3 (Legionella pneumophila (strain Lens)).